Here is a 257-residue protein sequence, read N- to C-terminus: Protein YIPF5 (257 aa).

Over 1-124 (MSGFDNFNTD…KASDGSIMNE (124 aa)) the chain is Cytoplasmic. A helical transmembrane segment spans residues 125–145 (TDLAGPMVFCLAFGATLLLTG). Residue Lys-146 is a topological domain, lumenal. Residues 147 to 167 (IQFGYVYGISAIGCLGMYCLL) form a helical membrane-spanning segment. Over 168–173 (NLMSMT) the chain is Cytoplasmic. The helical transmembrane segment at 174-194 (GVSFGCVASVLGYCLLPMIIL) threads the bilayer. Residues 195–196 (SS) are Lumenal-facing. Residues 197 to 217 (FGVIFSLQGIMGIILTAAIIG) traverse the membrane as a helical segment. At 218–236 (WCSLSASKIFISALAMDGQ) the chain is on the cytoplasmic side. The chain crosses the membrane as a helical span at residues 237-257 (QLLVAYPCALLYGVFALISVF).

Belongs to the YIP1 family.

It is found in the endoplasmic reticulum membrane. The protein resides in the golgi apparatus. The protein localises to the cis-Golgi network membrane. Plays a role in transport between endoplasmic reticulum and Golgi. The polypeptide is Protein YIPF5 (yipf5) (Danio rerio (Zebrafish)).